Here is a 503-residue protein sequence, read N- to C-terminus: Cytochrome P450 3A14 (503 aa).

Cys-442 is a heme binding site.

Belongs to the cytochrome P450 family. Requires heme as cofactor.

It is found in the endoplasmic reticulum membrane. The protein resides in the microsome membrane. The enzyme catalyses an organic molecule + reduced [NADPH--hemoprotein reductase] + O2 = an alcohol + oxidized [NADPH--hemoprotein reductase] + H2O + H(+). Cytochromes P450 are a group of heme-thiolate monooxygenases. In liver microsomes, this enzyme is involved in an NADPH-dependent electron transport pathway. It oxidizes a variety of structurally unrelated compounds, including steroids, fatty acids, and xenobiotics. The chain is Cytochrome P450 3A14 (CYP3A14) from Cavia porcellus (Guinea pig).